We begin with the raw amino-acid sequence, 323 residues long: Movement protein (323 aa).

Residues 292 to 322 adopt a coiled-coil conformation; sequence SLLENKDENLLRSMSTKIDTLGKKLSLIYDN.

This sequence belongs to the caulimoviridae movement protein family. Homotrimer, through the coiled-coil domain. Interacts with VAP.

It is found in the host cell junction. The protein localises to the host plasmodesma. In terms of biological role, transports viral genome to neighboring plant cells directly through plasmosdesmata, without any budding. The movement protein allows efficient cell to cell propagation, by bypassing the host cell wall barrier. Acts by forming tubules structures that increase the size exclusion limit (SEL) of plasmodesmata, thereby allowing viral ribonucleocapsids to spread directly to neighboring cells. This is Movement protein from Figwort mosaic virus (strain DxS) (FMV).